Reading from the N-terminus, the 266-residue chain is 5'-nucleotidase SurE (266 aa).

Asp10, Asp11, Ser41, and Asn97 together coordinate a divalent metal cation.

Belongs to the SurE nucleotidase family. A divalent metal cation is required as a cofactor.

Its subcellular location is the cytoplasm. It carries out the reaction a ribonucleoside 5'-phosphate + H2O = a ribonucleoside + phosphate. Nucleotidase that shows phosphatase activity on nucleoside 5'-monophosphates. The sequence is that of 5'-nucleotidase SurE from Methanocella arvoryzae (strain DSM 22066 / NBRC 105507 / MRE50).